Reading from the N-terminus, the 457-residue chain is tRNA modification GTPase MnmE (457 aa).

Arg22, Glu85, and Arg124 together coordinate (6S)-5-formyl-5,6,7,8-tetrahydrofolate. The 160-residue stretch at 219-378 folds into the TrmE-type G domain; sequence GATVVIAGKP…LKEKIYDLVL (160 aa). Asn229 is a binding site for K(+). GTP-binding positions include 229–234, 248–254, 273–276, and 333–336; these read NTGKSS, TPVPGTT, DTAG, and NKAD. Ser233 contributes to the Mg(2+) binding site. The K(+) site is built by Thr248, Val250, and Thr253. Thr254 provides a ligand contact to Mg(2+). Lys457 contacts (6S)-5-formyl-5,6,7,8-tetrahydrofolate.

This sequence belongs to the TRAFAC class TrmE-Era-EngA-EngB-Septin-like GTPase superfamily. TrmE GTPase family. In terms of assembly, homodimer. Heterotetramer of two MnmE and two MnmG subunits. The cofactor is K(+).

Its subcellular location is the cytoplasm. Exhibits a very high intrinsic GTPase hydrolysis rate. Involved in the addition of a carboxymethylaminomethyl (cmnm) group at the wobble position (U34) of certain tRNAs, forming tRNA-cmnm(5)s(2)U34. The chain is tRNA modification GTPase MnmE from Syntrophus aciditrophicus (strain SB).